The chain runs to 334 residues: Protein-methionine-sulfoxide reductase catalytic subunit MsrP (334 aa).

Residues 1–44 (MKKNQFLKESDVTAESVFFMKRRQVLKALGISAAALSLPHAAHA) constitute a signal peptide (tat-type signal). Mo-molybdopterin is bound by residues asparagine 88, 91 to 92 (YE), cysteine 146, threonine 181, asparagine 233, arginine 238, and 249 to 251 (GIK).

The protein belongs to the MsrP family. In terms of assembly, heterodimer of a catalytic subunit (MsrP) and a heme-binding subunit (MsrQ). Requires Mo-molybdopterin as cofactor. In terms of processing, predicted to be exported by the Tat system. The position of the signal peptide cleavage has not been experimentally proven.

It localises to the periplasm. It catalyses the reaction L-methionyl-[protein] + a quinone + H2O = L-methionyl-(S)-S-oxide-[protein] + a quinol. The catalysed reaction is L-methionyl-[protein] + a quinone + H2O = L-methionyl-(R)-S-oxide-[protein] + a quinol. Its function is as follows. Part of the MsrPQ system that repairs oxidized periplasmic proteins containing methionine sulfoxide residues (Met-O), using respiratory chain electrons. Thus protects these proteins from oxidative-stress damage caused by reactive species of oxygen and chlorine generated by the host defense mechanisms. MsrPQ is essential for the maintenance of envelope integrity under bleach stress, rescuing a wide series of structurally unrelated periplasmic proteins from methionine oxidation, including the primary periplasmic chaperone SurA and the lipoprotein Pal. The catalytic subunit MsrP is non-stereospecific, being able to reduce both (R-) and (S-) diastereoisomers of methionine sulfoxide. The polypeptide is Protein-methionine-sulfoxide reductase catalytic subunit MsrP (Shigella boydii serotype 18 (strain CDC 3083-94 / BS512)).